The sequence spans 362 residues: UDP-N-acetylglucosamine--N-acetylmuramyl-(pentapeptide) pyrophosphoryl-undecaprenol N-acetylglucosamine transferase (362 aa).

Residues 15–17 (TGG), asparagine 127, arginine 165, serine 191, isoleucine 247, 266–271 (ALTVSE), and glutamine 292 contribute to the UDP-N-acetyl-alpha-D-glucosamine site.

It belongs to the glycosyltransferase 28 family. MurG subfamily.

It localises to the cell inner membrane. It catalyses the reaction di-trans,octa-cis-undecaprenyl diphospho-N-acetyl-alpha-D-muramoyl-L-alanyl-D-glutamyl-meso-2,6-diaminopimeloyl-D-alanyl-D-alanine + UDP-N-acetyl-alpha-D-glucosamine = di-trans,octa-cis-undecaprenyl diphospho-[N-acetyl-alpha-D-glucosaminyl-(1-&gt;4)]-N-acetyl-alpha-D-muramoyl-L-alanyl-D-glutamyl-meso-2,6-diaminopimeloyl-D-alanyl-D-alanine + UDP + H(+). The protein operates within cell wall biogenesis; peptidoglycan biosynthesis. In terms of biological role, cell wall formation. Catalyzes the transfer of a GlcNAc subunit on undecaprenyl-pyrophosphoryl-MurNAc-pentapeptide (lipid intermediate I) to form undecaprenyl-pyrophosphoryl-MurNAc-(pentapeptide)GlcNAc (lipid intermediate II). The polypeptide is UDP-N-acetylglucosamine--N-acetylmuramyl-(pentapeptide) pyrophosphoryl-undecaprenol N-acetylglucosamine transferase (Shewanella baltica (strain OS185)).